The chain runs to 912 residues: Protein translocase subunit SecA (912 aa).

ATP-binding positions include Q87, 105 to 109, and D508; that span reads GEGKT. The segment at 865 to 912 is disordered; sequence DEEAAQVQSGNAPVPVSQVTRDEPKVGRNDPCPCGSGKKYKHCHGQLS. Zn(2+) is bound by residues C896, C898, C907, and H908. Over residues 902 to 912 the composition is skewed to basic residues; it reads KKYKHCHGQLS.

This sequence belongs to the SecA family. As to quaternary structure, monomer and homodimer. Part of the essential Sec protein translocation apparatus which comprises SecA, SecYEG and auxiliary proteins SecDF-YajC and YidC. The cofactor is Zn(2+).

Its subcellular location is the cell inner membrane. The protein resides in the cytoplasm. It catalyses the reaction ATP + H2O + cellular proteinSide 1 = ADP + phosphate + cellular proteinSide 2.. Functionally, part of the Sec protein translocase complex. Interacts with the SecYEG preprotein conducting channel. Has a central role in coupling the hydrolysis of ATP to the transfer of proteins into and across the cell membrane, serving both as a receptor for the preprotein-SecB complex and as an ATP-driven molecular motor driving the stepwise translocation of polypeptide chains across the membrane. The sequence is that of Protein translocase subunit SecA from Xanthomonas oryzae pv. oryzae (strain MAFF 311018).